We begin with the raw amino-acid sequence, 91 residues long: Small ribosomal subunit protein uS19 (91 aa).

This sequence belongs to the universal ribosomal protein uS19 family.

Functionally, protein S19 forms a complex with S13 that binds strongly to the 16S ribosomal RNA. This is Small ribosomal subunit protein uS19 (rpsS) from Mycoplasmopsis pulmonis (strain UAB CTIP) (Mycoplasma pulmonis).